A 230-amino-acid chain; its full sequence is Ribonuclease 3 (230 aa).

In terms of domain architecture, RNase III spans 5 to 134 (NDTISKVINY…LIGAIYIDGG (130 aa)). Glu47 lines the Mg(2+) pocket. Residue Asp51 is part of the active site. Mg(2+) is bound by residues Asn120 and Glu123. Residue Glu123 is part of the active site. Residues 159-228 (DPKTSLQEWT…AELILEKIKK (70 aa)) enclose the DRBM domain.

This sequence belongs to the ribonuclease III family. In terms of assembly, homodimer. The cofactor is Mg(2+).

The protein localises to the cytoplasm. It catalyses the reaction Endonucleolytic cleavage to 5'-phosphomonoester.. Its function is as follows. Digests double-stranded RNA. Involved in the processing of primary rRNA transcript to yield the immediate precursors to the large and small rRNAs (23S and 16S). Processes some mRNAs, and tRNAs when they are encoded in the rRNA operon. Processes pre-crRNA and tracrRNA of type II CRISPR loci if present in the organism. In Wolbachia pipientis subsp. Culex pipiens (strain wPip), this protein is Ribonuclease 3.